A 401-amino-acid polypeptide reads, in one-letter code: MTEFPVVLVINCGSSSIKFSVLDAASCDCLLNGVAEGINAERAFLSLNGGEPVALAPRGYEGALQAIAGALAQRDLIDSVALIGHRVAHGGDLFTESVIISEEVINNIRQVSSLAPLHNYASLSGIASAQRLFPQVMQVAVFDTSFHQTLAPEAFLYGLPWEYYQNLGVRRYGFHGTSHRYVSRRALALLGLPEQESGLVIAHLGNGASICAVRNGRSVDTSMGMTPLEGLMMGTRSGDVDFGAMAWIAGETRQTLSDLERVANTASGLLGISGLSSDLRVLEQAWHEGHARARLAIKTFVHRIARHIAGHAAALQRLDGIIFTGGIGENSVLIRRLVSERLAVFGLEMDVARNQQPNSVGERLISADASRVRCAVIPTNEERMIALDAIRLGRIHTAALA.

N11 and K18 together coordinate ATP. Residue N11 coordinates Mg(2+). R86 lines the substrate pocket. D143 acts as the Proton donor/acceptor in catalysis. ATP-binding positions include H175, 203-207 (HLGNG), 278-280 (DLR), and 326-330 (GIGEN).

This sequence belongs to the acetokinase family. TdcD subfamily. As to quaternary structure, homodimer. Requires Mg(2+) as cofactor.

It carries out the reaction propanoate + ATP = propanoyl phosphate + ADP. The protein operates within amino-acid degradation; L-threonine degradation via propanoate pathway; propanoate from L-threonine: step 4/4. Its function is as follows. Catalyzes the conversion of propionyl phosphate and ADP to propionate and ATP. The protein is Propionate kinase of Klebsiella pneumoniae (strain 342).